The following is a 529-amino-acid chain: Cytochrome P450 monooxygenase 136 (529 aa).

A helical transmembrane segment spans residues Ser9 to Tyr29. Heme is bound at residue Cys447.

It belongs to the cytochrome P450 family. It depends on heme as a cofactor.

The protein resides in the membrane. Its pathway is secondary metabolite biosynthesis. Cytochrome P450 monooxygenase that is able to use delta(6)-protoilludene as a substrate to produce delta(6)-protoilludene-5-ol. The sequence is that of Cytochrome P450 monooxygenase 136 from Postia placenta (strain ATCC 44394 / Madison 698-R) (Brown rot fungus).